A 70-amino-acid polypeptide reads, in one-letter code: uncharacterized protein (70 aa).

This is an uncharacterized protein from Acidianus convivator (ATV).